We begin with the raw amino-acid sequence, 160 residues long: Probable nucleoside diphosphate kinase DDB_G0292928 (160 aa).

Positions 12, 61, 103, 109, 122, and 132 each coordinate ATP. The Pros-phosphohistidine intermediate role is filled by histidine 135.

The protein belongs to the NDK family. The cofactor is Mg(2+).

It catalyses the reaction a 2'-deoxyribonucleoside 5'-diphosphate + ATP = a 2'-deoxyribonucleoside 5'-triphosphate + ADP. The enzyme catalyses a ribonucleoside 5'-diphosphate + ATP = a ribonucleoside 5'-triphosphate + ADP. The sequence is that of Probable nucleoside diphosphate kinase DDB_G0292928 from Dictyostelium discoideum (Social amoeba).